The primary structure comprises 331 residues: Glycerol-3-phosphate dehydrogenase [NAD(P)+] (331 aa).

NADPH-binding residues include Trp-11, Arg-30, and Lys-105. Residues Lys-105, Gly-134, and Ser-136 each coordinate sn-glycerol 3-phosphate. NADPH is bound at residue Ala-138. The sn-glycerol 3-phosphate site is built by Lys-189, Asp-242, Ser-252, Arg-253, and Asn-254. Catalysis depends on Lys-189, which acts as the Proton acceptor. Arg-253 lines the NADPH pocket. Positions 277 and 279 each coordinate NADPH.

This sequence belongs to the NAD-dependent glycerol-3-phosphate dehydrogenase family.

It localises to the cytoplasm. The catalysed reaction is sn-glycerol 3-phosphate + NAD(+) = dihydroxyacetone phosphate + NADH + H(+). The enzyme catalyses sn-glycerol 3-phosphate + NADP(+) = dihydroxyacetone phosphate + NADPH + H(+). The protein operates within membrane lipid metabolism; glycerophospholipid metabolism. In terms of biological role, catalyzes the reduction of the glycolytic intermediate dihydroxyacetone phosphate (DHAP) to sn-glycerol 3-phosphate (G3P), the key precursor for phospholipid synthesis. This is Glycerol-3-phosphate dehydrogenase [NAD(P)+] from Herminiimonas arsenicoxydans.